A 404-amino-acid polypeptide reads, in one-letter code: Probable tRNA sulfurtransferase (404 aa).

Residues 60–165 (TAVAESLKQV…EEAAYLSYET (106 aa)) enclose the THUMP domain. Residues 183-184 (ML), 208-209 (HF), Arg-265, Gly-287, and Gln-296 each bind ATP.

This sequence belongs to the ThiI family.

The protein localises to the cytoplasm. The enzyme catalyses [ThiI sulfur-carrier protein]-S-sulfanyl-L-cysteine + a uridine in tRNA + 2 reduced [2Fe-2S]-[ferredoxin] + ATP + H(+) = [ThiI sulfur-carrier protein]-L-cysteine + a 4-thiouridine in tRNA + 2 oxidized [2Fe-2S]-[ferredoxin] + AMP + diphosphate. It catalyses the reaction [ThiS sulfur-carrier protein]-C-terminal Gly-Gly-AMP + S-sulfanyl-L-cysteinyl-[cysteine desulfurase] + AH2 = [ThiS sulfur-carrier protein]-C-terminal-Gly-aminoethanethioate + L-cysteinyl-[cysteine desulfurase] + A + AMP + 2 H(+). It participates in cofactor biosynthesis; thiamine diphosphate biosynthesis. Its function is as follows. Catalyzes the ATP-dependent transfer of a sulfur to tRNA to produce 4-thiouridine in position 8 of tRNAs, which functions as a near-UV photosensor. Also catalyzes the transfer of sulfur to the sulfur carrier protein ThiS, forming ThiS-thiocarboxylate. This is a step in the synthesis of thiazole, in the thiamine biosynthesis pathway. The sulfur is donated as persulfide by IscS. The sequence is that of Probable tRNA sulfurtransferase from Streptococcus pneumoniae serotype 2 (strain D39 / NCTC 7466).